The following is a 403-amino-acid chain: MTKIMAVNAGSSSLKFQLLEMPTEELLAVGLVERVGKEDAIFTIKYGEGQKFNVVTPLHTHKEAVELTLEKLIELDIIQSFDEISGVGHRVLHGKELYADSVVIDDEVMKNIESFTELGPLHIPPNLTGIRAFQAILPNVPQVAVFDTAFHQSMPEENFLYSLPYEYYTEHGVRKYGFHGTSHKYVTQRAAELLGRPLEDLRLISCHLGSGASIAAVAGGRSIDTTMGFTPLEGITMGTRSGSLDPALIPFLMQKTGKSAEDVLNVMNKESGVYGLSGISSDLRDIEQAAAEGNHRAEVSLKIFSNRIHGYIGQYAAEMNGVDAIIFTAGVGENSDVIRERILRGLEFMGVYWDPSLNNGARGKELFINYPHSPVKVIIIPTNEELVIARDTVRIANLVEAHA.

Residue Asn-8 participates in Mg(2+) binding. Lys-15 is an ATP binding site. Arg-90 contacts substrate. The Proton donor/acceptor role is filled by Asp-147. ATP-binding positions include 207–211 (HLGSG), 282–284 (DLR), and 330–334 (GVGEN). A Mg(2+)-binding site is contributed by Glu-384.

The protein belongs to the acetokinase family. In terms of assembly, homodimer. Mg(2+) is required as a cofactor. The cofactor is Mn(2+).

It is found in the cytoplasm. It carries out the reaction acetate + ATP = acetyl phosphate + ADP. The protein operates within metabolic intermediate biosynthesis; acetyl-CoA biosynthesis; acetyl-CoA from acetate: step 1/2. In terms of biological role, catalyzes the formation of acetyl phosphate from acetate and ATP. Can also catalyze the reverse reaction. The sequence is that of Acetate kinase from Exiguobacterium sp. (strain ATCC BAA-1283 / AT1b).